The following is a 270-amino-acid chain: MRLTVVGANGKMGRELITAIQRREDVELCAVLVRKGSPFVDKDASILTGSDFLNIRITDDPENAFSNTEGILDFSQPQASILYANYAAQKSLVHIIGTTGFSKTEEEKIADFAKDTTIVKSGNMSLGVNLLASLVKKAAKALEVDDFDIEIYEMHHSGKVDAPSGTALLLGQAAAEGRNVMLKNVSVNARNGYTGEREKGTIGFACSRGGTVVGDHSITFAGPNERIVLSHVAQDRSIFANGALKAALWAKNHENGLYSMLDVLGLKDEF.

Position 7-12 (7-12 (GANGKM)) interacts with NAD(+). An NADP(+)-binding site is contributed by Arg-34. Residues 97-99 (GTT) and 121-124 (SGNM) contribute to the NAD(+) site. The active-site Proton donor/acceptor is His-155. Residue His-156 coordinates (S)-2,3,4,5-tetrahydrodipicolinate. Residue Lys-159 is the Proton donor of the active site. A (S)-2,3,4,5-tetrahydrodipicolinate-binding site is contributed by 165–166 (GT).

It belongs to the DapB family.

It is found in the cytoplasm. The enzyme catalyses (S)-2,3,4,5-tetrahydrodipicolinate + NAD(+) + H2O = (2S,4S)-4-hydroxy-2,3,4,5-tetrahydrodipicolinate + NADH + H(+). It carries out the reaction (S)-2,3,4,5-tetrahydrodipicolinate + NADP(+) + H2O = (2S,4S)-4-hydroxy-2,3,4,5-tetrahydrodipicolinate + NADPH + H(+). It participates in amino-acid biosynthesis; L-lysine biosynthesis via DAP pathway; (S)-tetrahydrodipicolinate from L-aspartate: step 4/4. Catalyzes the conversion of 4-hydroxy-tetrahydrodipicolinate (HTPA) to tetrahydrodipicolinate. This is 4-hydroxy-tetrahydrodipicolinate reductase from Bartonella quintana (strain Toulouse) (Rochalimaea quintana).